Here is a 341-residue protein sequence, read N- to C-terminus: Anthranilate phosphoribosyltransferase (341 aa).

Residues glycine 79, 82–83, threonine 87, 89–92, 107–115, and serine 119 contribute to the 5-phospho-alpha-D-ribose 1-diphosphate site; these read GD, NIST, and KHGNRAASS. Anthranilate is bound at residue glycine 79. Serine 91 lines the Mg(2+) pocket. Asparagine 110 provides a ligand contact to anthranilate. Position 165 (arginine 165) interacts with anthranilate. Mg(2+) contacts are provided by aspartate 224 and glutamate 225.

This sequence belongs to the anthranilate phosphoribosyltransferase family. In terms of assembly, homodimer. Mg(2+) is required as a cofactor.

It catalyses the reaction N-(5-phospho-beta-D-ribosyl)anthranilate + diphosphate = 5-phospho-alpha-D-ribose 1-diphosphate + anthranilate. It participates in amino-acid biosynthesis; L-tryptophan biosynthesis; L-tryptophan from chorismate: step 2/5. Catalyzes the transfer of the phosphoribosyl group of 5-phosphorylribose-1-pyrophosphate (PRPP) to anthranilate to yield N-(5'-phosphoribosyl)-anthranilate (PRA). This Dehalococcoides mccartyi (strain ATCC BAA-2266 / KCTC 15142 / 195) (Dehalococcoides ethenogenes (strain 195)) protein is Anthranilate phosphoribosyltransferase.